Consider the following 159-residue polypeptide: MRVYLGSDHAGFELKQQIIAHLEQSGHQPIDCGAFSYDADDDYPAFCIAAATRTVADPDSLGIVLGGSGNGEQIAANKVPGARCALAWSVETAQLAREHNNAQLIGIGGRMHTVAEALAIVDAFVTTPWSKAPRHQRRIDILAEYERTHQAPPVPGAVG.

D-ribulose 5-phosphate contacts are provided by residues 8-9 (DH) and 67-71 (GSGNG). Catalysis depends on Glu-72, which acts as the Proton acceptor. His-99 functions as the Proton donor in the catalytic mechanism. 4 residues coordinate D-ribulose 5-phosphate: Asn-100, Arg-110, Arg-134, and Arg-138.

This sequence belongs to the LacAB/RpiB family. In terms of assembly, homodimer.

It catalyses the reaction aldehydo-D-ribose 5-phosphate = D-ribulose 5-phosphate. The protein operates within carbohydrate degradation; pentose phosphate pathway; D-ribose 5-phosphate from D-ribulose 5-phosphate (non-oxidative stage): step 1/1. Catalyzes the interconversion of ribulose-5-P and ribose-5-P. This Mycolicibacterium paratuberculosis (strain ATCC BAA-968 / K-10) (Mycobacterium paratuberculosis) protein is Ribose-5-phosphate isomerase B.